The following is a 181-amino-acid chain: MQNEIRQDKIIGSRRFSNYFWAFFLLVGGLGFLLAGISSYFKVNLLPFTNTTELVFIPQGLVMMFYGALSLGISIYTLLTIILDIGSGYNEYNRIENLVKVVRKGFPGKNREILLTYSLSNVRAIGIKITEGLNPTRSIYLCLKDERNIPLTPVQEPTAISNLEEEATDLAKFLDLRLENL.

Transmembrane regions (helical) follow at residues 19–39 (YFWA…GISS) and 62–82 (VMMF…LTII).

This sequence belongs to the Ycf4 family.

The protein resides in the plastid. Its subcellular location is the chloroplast thylakoid membrane. Its function is as follows. Seems to be required for the assembly of the photosystem I complex. In Phaeodactylum tricornutum (strain CCAP 1055/1), this protein is Photosystem I assembly protein Ycf4.